The primary structure comprises 343 residues: Cytoplasmic tRNA 2-thiolation protein 1 (343 aa).

The protein belongs to the TtcA family. CTU1/NCS6/ATPBD3 subfamily.

The protein resides in the cytoplasm. It functions in the pathway tRNA modification; 5-methoxycarbonylmethyl-2-thiouridine-tRNA biosynthesis. Its function is as follows. Plays a central role in 2-thiolation of mcm(5)S(2)U at tRNA wobble positions of tRNA(Lys), tRNA(Glu) and tRNA(Gln). Directly binds tRNAs and probably acts by catalyzing adenylation of tRNAs, an intermediate required for 2-thiolation. It is unclear whether it acts as a sulfurtransferase that transfers sulfur from thiocarboxylated URM1 onto the uridine of tRNAs at wobble position. This Drosophila sechellia (Fruit fly) protein is Cytoplasmic tRNA 2-thiolation protein 1.